The sequence spans 374 residues: Bifunctional enzyme IspD/IspF (374 aa).

The 2-C-methyl-D-erythritol 4-phosphate cytidylyltransferase stretch occupies residues 1–213 (MLDVTLIVLC…PCLKAPSNNF (213 aa)). Residues 214–374 (FTGTGFDIHA…TLKYYNWKKR (161 aa)) are 2-C-methyl-D-erythritol 2,4-cyclodiphosphate synthase. 2 residues coordinate a divalent metal cation: aspartate 220 and histidine 222. 4-CDP-2-C-methyl-D-erythritol 2-phosphate contacts are provided by residues 220–222 (DIH) and 246–247 (HS). Residue histidine 254 coordinates a divalent metal cation. Residues 268-270 (DIG), 273-277 (FPDTD), 344-347 (TTAE), phenylalanine 351, and arginine 354 contribute to the 4-CDP-2-C-methyl-D-erythritol 2-phosphate site.

It in the N-terminal section; belongs to the IspD/TarI cytidylyltransferase family. IspD subfamily. The protein in the C-terminal section; belongs to the IspF family. The cofactor is a divalent metal cation.

The enzyme catalyses 2-C-methyl-D-erythritol 4-phosphate + CTP + H(+) = 4-CDP-2-C-methyl-D-erythritol + diphosphate. The catalysed reaction is 4-CDP-2-C-methyl-D-erythritol 2-phosphate = 2-C-methyl-D-erythritol 2,4-cyclic diphosphate + CMP. It functions in the pathway isoprenoid biosynthesis; isopentenyl diphosphate biosynthesis via DXP pathway; isopentenyl diphosphate from 1-deoxy-D-xylulose 5-phosphate: step 2/6. Its pathway is isoprenoid biosynthesis; isopentenyl diphosphate biosynthesis via DXP pathway; isopentenyl diphosphate from 1-deoxy-D-xylulose 5-phosphate: step 4/6. In terms of biological role, bifunctional enzyme that catalyzes the formation of 4-diphosphocytidyl-2-C-methyl-D-erythritol from CTP and 2-C-methyl-D-erythritol 4-phosphate (MEP) (IspD), and catalyzes the conversion of 4-diphosphocytidyl-2-C-methyl-D-erythritol 2-phosphate (CDP-ME2P) to 2-C-methyl-D-erythritol 2,4-cyclodiphosphate (ME-CPP) with a corresponding release of cytidine 5-monophosphate (CMP) (IspF). This Aliarcobacter butzleri (strain RM4018) (Arcobacter butzleri) protein is Bifunctional enzyme IspD/IspF.